Here is a 342-residue protein sequence, read N- to C-terminus: Delta(6)-protoilludene synthase 8 (342 aa).

Residue Asp81 coordinates Mg(2+). The short motif at 93-97 (RDMVD) is the DDXXD motif element. Mg(2+) contacts are provided by Asn217, Ser221, and Glu225. The NSE/DTE motif signature appears at 217–225 (NDLVSYNRE). (2E,6E)-farnesyl diphosphate-binding residues include Arg305 and Tyr306.

This sequence belongs to the terpene synthase family. Requires Mg(2+) as cofactor.

It carries out the reaction (2E,6E)-farnesyl diphosphate = Delta(6)-protoilludene + diphosphate. Functionally, terpene cyclase that catalyzes the cyclization of farnesyl diphosphate (FPP) to delta(6)-protoilludene. The protein is Delta(6)-protoilludene synthase 8 of Postia placenta (strain ATCC 44394 / Madison 698-R) (Brown rot fungus).